The sequence spans 530 residues: Pyridoxine/pyridoxamine 5'-phosphate oxidase 1, chloroplastic (530 aa).

The transit peptide at 1-64 (MRNVIRRVTT…TLCTKVIIPN (64 aa)) directs the protein to the chloroplast. Met-65 carries the N-acetylmethionine modification. The 217-residue stretch at 81–297 (AAEIDETLMG…SVAEKYKLEL (217 aa)) folds into the YjeF N-terminal domain. (6S)-NADPHX is bound at residue 131–135 (NNGGD). Asn-132 and Asp-196 together coordinate K(+). Residues 200-206 (GFSFHGA) and Asp-238 each bind (6S)-NADPHX. Ser-241 contacts K(+). Residue 247–250 (EGDH) coordinates pyridoxal 5'-phosphate. Residue 321–324 (RVNY) coordinates substrate. 325–327 (VSP) is a binding site for pyridoxal 5'-phosphate. An FMN-binding site is contributed by 374 to 377 (RMVL). Pyridoxal 5'-phosphate is bound at residue Lys-379. FMN contacts are provided by residues 389–390 (FT), 395–396 (KK), and Gln-418. 3 residues coordinate pyridoxal 5'-phosphate: Tyr-436, Arg-440, and Ser-444. FMN-binding positions include 453 to 454 (QS) and Trp-499. Pyridoxal 5'-phosphate is bound at residue 505–507 (RLH). Arg-509 serves as a coordination point for FMN.

It in the N-terminal section; belongs to the NnrE/AIBP family. The protein in the C-terminal section; belongs to the pyridoxamine 5'-phosphate oxidase family. Homodimer. FMN is required as a cofactor. The cofactor is K(+). In terms of tissue distribution, expressed in leaves, stems, flowers and roots.

It localises to the plastid. The protein resides in the chloroplast. It carries out the reaction pyridoxamine 5'-phosphate + O2 + H2O = pyridoxal 5'-phosphate + H2O2 + NH4(+). The catalysed reaction is pyridoxine 5'-phosphate + O2 = pyridoxal 5'-phosphate + H2O2. It catalyses the reaction (6R)-NADHX = (6S)-NADHX. The enzyme catalyses (6R)-NADPHX = (6S)-NADPHX. Its pathway is cofactor metabolism; pyridoxal 5'-phosphate salvage; pyridoxal 5'-phosphate from pyridoxamine 5'-phosphate: step 1/1. The protein operates within cofactor metabolism; pyridoxal 5'-phosphate salvage; pyridoxal 5'-phosphate from pyridoxine 5'-phosphate: step 1/1. Functionally, catalyzes the oxidation of either pyridoxine 5'-phosphate (PNP) or pyridoxamine 5'-phosphate (PMP) into pyridoxal 5'-phosphate (PLP). Involved in the PLP salvage pathway. Has a higher preference for PNP over PMP. May also catalyze the epimerization of the S- and R-forms of NAD(P)HX, a damaged form of NAD(P)H that is a result of enzymatic or heat-dependent hydration. This is a prerequisite for the S-specific NAD(P)H-hydrate dehydratase to allow the repair of both epimers of NAD(P)HX. The protein is Pyridoxine/pyridoxamine 5'-phosphate oxidase 1, chloroplastic (PPOX1) of Arabidopsis thaliana (Mouse-ear cress).